Reading from the N-terminus, the 487-residue chain is Glutamate--tRNA ligase (487 aa).

Residues 13-23 carry the 'HIGH' region motif; it reads PSPTGLFHIGG. The short motif at 255-259 is the 'KMSKS' region element; it reads KLSKR. Lysine 258 serves as a coordination point for ATP.

Belongs to the class-I aminoacyl-tRNA synthetase family. Glutamate--tRNA ligase type 1 subfamily. In terms of assembly, monomer.

It is found in the cytoplasm. The enzyme catalyses tRNA(Glu) + L-glutamate + ATP = L-glutamyl-tRNA(Glu) + AMP + diphosphate. In terms of biological role, catalyzes the attachment of glutamate to tRNA(Glu) in a two-step reaction: glutamate is first activated by ATP to form Glu-AMP and then transferred to the acceptor end of tRNA(Glu). In Malacoplasma penetrans (strain HF-2) (Mycoplasma penetrans), this protein is Glutamate--tRNA ligase.